An 89-amino-acid chain; its full sequence is Small ribosomal subunit protein uS15 (89 aa).

Belongs to the universal ribosomal protein uS15 family. As to quaternary structure, part of the 30S ribosomal subunit. Forms a bridge to the 50S subunit in the 70S ribosome, contacting the 23S rRNA.

Functionally, one of the primary rRNA binding proteins, it binds directly to 16S rRNA where it helps nucleate assembly of the platform of the 30S subunit by binding and bridging several RNA helices of the 16S rRNA. Its function is as follows. Forms an intersubunit bridge (bridge B4) with the 23S rRNA of the 50S subunit in the ribosome. The polypeptide is Small ribosomal subunit protein uS15 (Marinomonas sp. (strain MWYL1)).